A 328-amino-acid chain; its full sequence is Probable GDP-L-fucose synthase 1 (328 aa).

Residue 25–31 (GHRGLVG) participates in NADP(+) binding. Tyrosine 152 acts as the Proton donor/acceptor in catalysis. NADP(+)-binding positions include lysine 156, 179–182 (PTNL), and histidine 195. Arginine 203, tryptophan 218, arginine 225, and aspartate 285 together coordinate substrate.

The protein belongs to the NAD(P)-dependent epimerase/dehydratase family. Fucose synthase subfamily. Homodimer.

It carries out the reaction GDP-beta-L-fucose + NADP(+) = GDP-4-dehydro-alpha-D-rhamnose + NADPH + H(+). Its pathway is nucleotide-sugar biosynthesis; GDP-L-fucose biosynthesis via de novo pathway; GDP-L-fucose from GDP-alpha-D-mannose: step 2/2. Catalyzes the two-step NADP-dependent conversion of GDP-4-dehydro-6-deoxy-D-mannose to GDP-fucose, involving an epimerase and a reductase reaction. This Oryza sativa subsp. japonica (Rice) protein is Probable GDP-L-fucose synthase 1.